We begin with the raw amino-acid sequence, 283 residues long: Protein canopy homolog 3 (283 aa).

Positions 1–35 (MEPLPEPTSRPRLRPRPRCLLLLPLLLLLLLLLPA) are cleaved as a signal peptide. Residues 55–276 (SKCEVCKYVA…EGIQKASPLT (222 aa)) form the Saposin B-type domain. N-linked (GlcNAc...) asparagine glycosylation occurs at asparagine 161. A coiled-coil region spans residues 161–187 (NETSAEVADLKKQCDVLVEEFEEVIED). The segment at 223-283 (KGDTAALGGK…PLTHSPPDEL (61 aa)) is disordered.

Belongs to the canopy family. Interacts with HSP90B1; this interaction is disrupted in the presence of ATP. Interacts with TLR1, TLR2, TLR4 and TLR9.

Its subcellular location is the endoplasmic reticulum. Toll-like receptor (TLR)-specific co-chaperone for HSP90B1. Required for proper TLR folding, except that of TLR3, and hence controls TLR exit from the endoplasmic reticulum. Consequently, required for both innate and adaptive immune responses. In Sus scrofa (Pig), this protein is Protein canopy homolog 3 (CNPY3).